The sequence spans 35 residues: Photosystem II reaction center protein T (35 aa).

Residues 3–23 (ALVYTFLLVSTLGIIFFAIFF) form a helical membrane-spanning segment.

The protein belongs to the PsbT family. In terms of assembly, PSII is composed of 1 copy each of membrane proteins PsbA, PsbB, PsbC, PsbD, PsbE, PsbF, PsbH, PsbI, PsbJ, PsbK, PsbL, PsbM, PsbT, PsbY, PsbZ, Psb30/Ycf12, at least 3 peripheral proteins of the oxygen-evolving complex and a large number of cofactors. It forms dimeric complexes.

It is found in the plastid. It localises to the chloroplast thylakoid membrane. Its function is as follows. Found at the monomer-monomer interface of the photosystem II (PS II) dimer, plays a role in assembly and dimerization of PSII. PSII is a light-driven water plastoquinone oxidoreductase, using light energy to abstract electrons from H(2)O, generating a proton gradient subsequently used for ATP formation. The sequence is that of Photosystem II reaction center protein T from Cycas revoluta (Sago palm).